We begin with the raw amino-acid sequence, 361 residues long: Deoxyhypusine hydroxylase (361 aa).

4 HEAT-like PBS-type repeats span residues 59-85, 94-120, 183-211, and 216-242; these read LKHELAYVLGQLLNTRALPTLSRVLEN, VRHEAAEALGAIGAEESLPILRKYMQD, QRYRAMFALRDFGAGSKEAVEALADGFRD, and FRHEIAYIFGQLSSPYSIPSLLSRLRD. Positions 61, 62, 96, and 97 each coordinate Fe cation. The Fe cation site is built by His-218, Glu-219, His-251, and Glu-252.

The protein belongs to the deoxyhypusine hydroxylase family. Requires Fe(2+) as cofactor.

It is found in the cytoplasm. The protein resides in the nucleus. It catalyses the reaction [eIF5A protein]-deoxyhypusine + AH2 + O2 = [eIF5A protein]-hypusine + A + H2O. It participates in protein modification; eIF5A hypusination. Its function is as follows. Catalyzes the hydroxylation of the N(6)-(4-aminobutyl)-L-lysine intermediate to form hypusine, an essential post-translational modification only found in mature eIF-5A factor. This is Deoxyhypusine hydroxylase from Cryptococcus neoformans var. neoformans serotype D (strain B-3501A) (Filobasidiella neoformans).